The primary structure comprises 980 residues: Valine--tRNA ligase (980 aa).

The short motif at 43-53 (PNVTGTLHMGH) is the 'HIGH' region element. A 'KMSKS' region motif is present at residues 586–590 (KMSKS). Lys589 contributes to the ATP binding site. Residues 914 to 980 (LVDMDAERMR…AGLREQRGKL (67 aa)) are a coiled coil.

It belongs to the class-I aminoacyl-tRNA synthetase family. ValS type 1 subfamily. Monomer.

It localises to the cytoplasm. It catalyses the reaction tRNA(Val) + L-valine + ATP = L-valyl-tRNA(Val) + AMP + diphosphate. Its function is as follows. Catalyzes the attachment of valine to tRNA(Val). As ValRS can inadvertently accommodate and process structurally similar amino acids such as threonine, to avoid such errors, it has a 'posttransfer' editing activity that hydrolyzes mischarged Thr-tRNA(Val) in a tRNA-dependent manner. This chain is Valine--tRNA ligase, found in Xanthomonas oryzae pv. oryzae (strain PXO99A).